A 293-amino-acid chain; its full sequence is Formamidopyrimidine-DNA glycosylase (293 aa).

Pro2 acts as the Schiff-base intermediate with DNA in catalysis. The active-site Proton donor is Glu3. Catalysis depends on Lys58, which acts as the Proton donor; for beta-elimination activity. Residues His104, Arg123, and Arg166 each coordinate DNA. The segment at 257–293 (QVYDREGDKCRTPACKGAVKRFTQNGRSTFWCPVCQT) adopts an FPG-type zinc-finger fold. Arg283 serves as the catalytic Proton donor; for delta-elimination activity.

The protein belongs to the FPG family. As to quaternary structure, monomer. Requires Zn(2+) as cofactor.

The enzyme catalyses Hydrolysis of DNA containing ring-opened 7-methylguanine residues, releasing 2,6-diamino-4-hydroxy-5-(N-methyl)formamidopyrimidine.. The catalysed reaction is 2'-deoxyribonucleotide-(2'-deoxyribose 5'-phosphate)-2'-deoxyribonucleotide-DNA = a 3'-end 2'-deoxyribonucleotide-(2,3-dehydro-2,3-deoxyribose 5'-phosphate)-DNA + a 5'-end 5'-phospho-2'-deoxyribonucleoside-DNA + H(+). Its function is as follows. Involved in base excision repair of DNA damaged by oxidation or by mutagenic agents. Acts as a DNA glycosylase that recognizes and removes damaged bases. Has a preference for oxidized purines, such as 7,8-dihydro-8-oxoguanine (8-oxoG). Has AP (apurinic/apyrimidinic) lyase activity and introduces nicks in the DNA strand. Cleaves the DNA backbone by beta-delta elimination to generate a single-strand break at the site of the removed base with both 3'- and 5'-phosphates. The polypeptide is Formamidopyrimidine-DNA glycosylase (Nitrobacter winogradskyi (strain ATCC 25391 / DSM 10237 / CIP 104748 / NCIMB 11846 / Nb-255)).